The following is a 977-amino-acid chain: Aspartate, glycine, lysine and serine-rich protein (977 aa).

Residues 23–116 (GVLPDVDSGF…PITNLGSSTS (94 aa)) are disordered. Positions 37–50 (EETKSEPKQPDTKP) are enriched in basic and acidic residues. A compositionally biased stretch (polar residues) spans 51-63 (EQPSVSKPDSSVN). A glycan (N-linked (GlcNAc...) asparagine) is linked at N136. 2 disordered regions span residues 246 to 767 (AGGG…TSRG) and 780 to 922 (GGGK…GSGL). Positions 251–278 (YYSDSSDSSDSDSSGSDSSESGSSESGS) are enriched in low complexity. Residues 309–325 (NGSPDNGTPGSGSSRYT) show a composition bias toward polar residues. Residues 410–427 (LEDELLGSDSSDEDDIDD) are compositionally biased toward acidic residues. Residues 428–443 (GLGGLGLGAGPGGPGG) are compositionally biased toward gly residues. 2 stretches are compositionally biased toward basic residues: residues 447–457 (TPKHKPRTDKK) and 465–540 (KRKP…VQRK). A compositionally biased stretch (basic and acidic residues) spans 541–557 (QPREYKQESPEVEREHS). The segment covering 572 to 583 (KILITSLTSSRG) has biased composition (low complexity). Positions 591–643 (DGSGSGNGGGDDGNGGGAGNGGGAGNGGGAGNGGGAGNGGGNGGGGNGGGGND) are enriched in gly residues. A compositionally biased stretch (basic and acidic residues) spans 660 to 675 (EHRNRCEDDDDYREKC). Residues 700–724 (SGSSSSSSATESESSSTSTTPSTSS) are compositionally biased toward low complexity. 3 stretches are compositionally biased toward polar residues: residues 730 to 744 (ILST…TRSG), 758 to 767 (SRPSVATSRG), and 785 to 801 (STGT…TSSA). Low complexity-rich tracts occupy residues 803 to 814 (GLDLSGLLGQLG), 822 to 857 (GPKP…GLLG), and 870 to 907 (KKPT…KLSP).

In terms of tissue distribution, component of the acid-insoluble and acid-soluble organic matrix of calcified layers of the shell (at protein level).

The protein resides in the secreted. This chain is Aspartate, glycine, lysine and serine-rich protein, found in Lottia gigantea (Giant owl limpet).